A 342-amino-acid polypeptide reads, in one-letter code: Ketol-acid reductoisomerase (NADP(+)) (342 aa).

Positions 2–182 (AEIYYDNDAD…GGLRAGGIKT (181 aa)) constitute a KARI N-terminal Rossmann domain. NADP(+) is bound by residues 25 to 28 (YGSQ), Lys-48, Ser-51, Ser-53, and 83 to 86 (DQVQ). His-108 is a catalytic residue. Residue Gly-134 participates in NADP(+) binding. The KARI C-terminal knotted domain maps to 183 to 328 (TFTEETETDL…RELRKLFAWN (146 aa)). Mg(2+) contacts are provided by Asp-191, Glu-195, Glu-227, and Glu-231. Position 252 (Ser-252) interacts with substrate.

This sequence belongs to the ketol-acid reductoisomerase family. It depends on Mg(2+) as a cofactor.

The catalysed reaction is (2R)-2,3-dihydroxy-3-methylbutanoate + NADP(+) = (2S)-2-acetolactate + NADPH + H(+). It catalyses the reaction (2R,3R)-2,3-dihydroxy-3-methylpentanoate + NADP(+) = (S)-2-ethyl-2-hydroxy-3-oxobutanoate + NADPH + H(+). It participates in amino-acid biosynthesis; L-isoleucine biosynthesis; L-isoleucine from 2-oxobutanoate: step 2/4. The protein operates within amino-acid biosynthesis; L-valine biosynthesis; L-valine from pyruvate: step 2/4. Its function is as follows. Involved in the biosynthesis of branched-chain amino acids (BCAA). Catalyzes an alkyl-migration followed by a ketol-acid reduction of (S)-2-acetolactate (S2AL) to yield (R)-2,3-dihydroxy-isovalerate. In the isomerase reaction, S2AL is rearranged via a Mg-dependent methyl migration to produce 3-hydroxy-3-methyl-2-ketobutyrate (HMKB). In the reductase reaction, this 2-ketoacid undergoes a metal-dependent reduction by NADPH to yield (R)-2,3-dihydroxy-isovalerate. The polypeptide is Ketol-acid reductoisomerase (NADP(+)) (Leifsonia xyli subsp. xyli (strain CTCB07)).